A 128-amino-acid polypeptide reads, in one-letter code: MMVMKRPSLRQFSWLLGGSLLLGALFWLWLAVQQQEATLAIRPVGQGIGMPDGFSVWHHLDANGIRFKSITPQKDGLLIKFDSTAQGAAAKEVLGRALPHGYIIALLEDDNSPTAWLSRLRDAPHRLG.

The Cytoplasmic segment spans residues Met-1–Gln-11. A helical membrane pass occupies residues Phe-12–Val-32. At Gln-33–Gly-128 the chain is on the periplasmic side.

It belongs to the MzrA family. Interacts with EnvZ.

The protein localises to the cell inner membrane. In terms of biological role, modulates the activity of the EnvZ/OmpR two-component regulatory system, probably by directly modulating EnvZ enzymatic activity and increasing stability of phosphorylated OmpR. This is Modulator protein MzrA from Klebsiella pneumoniae subsp. pneumoniae (strain ATCC 700721 / MGH 78578).